Consider the following 636-residue polypeptide: Translation factor GUF1, mitochondrial (636 aa).

Positions 35 to 218 (SNYRNFSIVA…AIIRDIPGPR (184 aa)) constitute a tr-type G domain. GTP is bound by residues 44-51 (AHVDHGKS), 111-115 (DTPGH), and 165-168 (NKID).

Belongs to the TRAFAC class translation factor GTPase superfamily. Classic translation factor GTPase family. LepA subfamily.

The protein localises to the mitochondrion inner membrane. The enzyme catalyses GTP + H2O = GDP + phosphate + H(+). In terms of biological role, promotes mitochondrial protein synthesis. May act as a fidelity factor of the translation reaction, by catalyzing a one-codon backward translocation of tRNAs on improperly translocated ribosomes. Binds to mitochondrial ribosomes in a GTP-dependent manner. This Debaryomyces hansenii (strain ATCC 36239 / CBS 767 / BCRC 21394 / JCM 1990 / NBRC 0083 / IGC 2968) (Yeast) protein is Translation factor GUF1, mitochondrial.